Reading from the N-terminus, the 736-residue chain is Prospero homeobox protein 1 (736 aa).

Polar residues predominate over residues 103 to 135 (KNGGTEPSFQASGLSSTGSEVHQEDVCSNSSRD). A disordered region spans residues 103-146 (KNGGTEPSFQASGLSSTGSEVHQEDVCSNSSRDSPQECLSPFGR). The Nuclear localization signal signature appears at 163–168 (RAKRAR). 5 disordered regions span residues 180-220 (PRVA…QQQS), 261-301 (YDST…EMCE), 319-344 (EIGE…HPEG), 445-465 (NSSD…SLHQ), and 499-518 (PSAS…DLTR). The span at 264-274 (TDSENDEDGNL) shows a compositional bias: acidic residues. Residues 319–335 (EIGENKPKREGPKEKDQ) show a composition bias toward basic and acidic residues. The segment covering 450-460 (PASAPPAGGHH) has biased composition (low complexity). Basic and acidic residues predominate over residues 505–518 (GKERASPESLDLTR). In terms of domain architecture, Prospero-type homeo spans 576–634 (QEGLSPNHLKKAKLMFFYTRYPSSNMLKTYFSDVKFNRCITSQLIKWFSNFREFYYIQM). Residues 576–734 (QEGLSPNHLK…KSPNCLQELL (159 aa)) form a homeo-Prospero region. The Prospero domain occupies 635 to 734 (EKYARQAIND…KSPNCLQELL (100 aa)).

Belongs to the Prospero homeodomain family. As to expression, expressed most actively in the developing lens and midgut and at lower levels in the developing brain, heart, muscle and retina.

Its subcellular location is the nucleus. Functionally, transcription factor which may be involved in developmental processes such as cell fate determination, gene transcriptional regulation and progenitor cell regulation in a number of organs. May be essential in the development and function of the eye. May play a role in the regulation of the circadian rhythm by repressing the expression of clock genes. The sequence is that of Prospero homeobox protein 1 (PROX1) from Gallus gallus (Chicken).